Consider the following 206-residue polypeptide: dITP/XTP pyrophosphatase (206 aa).

Residue 7–12 (SSHGYK) coordinates substrate. Residue Asp70 is the Proton acceptor of the active site. Asp70 contributes to the Mg(2+) binding site. Substrate is bound by residues Thr71, 154 to 157 (FGYD), Lys177, and 182 to 183 (HR).

It belongs to the HAM1 NTPase family. As to quaternary structure, homodimer. Mg(2+) is required as a cofactor.

The catalysed reaction is XTP + H2O = XMP + diphosphate + H(+). It carries out the reaction dITP + H2O = dIMP + diphosphate + H(+). It catalyses the reaction ITP + H2O = IMP + diphosphate + H(+). Functionally, pyrophosphatase that catalyzes the hydrolysis of nucleoside triphosphates to their monophosphate derivatives, with a high preference for the non-canonical purine nucleotides XTP (xanthosine triphosphate), dITP (deoxyinosine triphosphate) and ITP. Seems to function as a house-cleaning enzyme that removes non-canonical purine nucleotides from the nucleotide pool, thus preventing their incorporation into DNA/RNA and avoiding chromosomal lesions. The sequence is that of dITP/XTP pyrophosphatase from Chlamydia pneumoniae (Chlamydophila pneumoniae).